A 216-amino-acid chain; its full sequence is Probable transaldolase (216 aa).

The Schiff-base intermediate with substrate role is filled by lysine 83.

It belongs to the transaldolase family. Type 3B subfamily.

It localises to the cytoplasm. The catalysed reaction is D-sedoheptulose 7-phosphate + D-glyceraldehyde 3-phosphate = D-erythrose 4-phosphate + beta-D-fructose 6-phosphate. It functions in the pathway carbohydrate degradation; pentose phosphate pathway; D-glyceraldehyde 3-phosphate and beta-D-fructose 6-phosphate from D-ribose 5-phosphate and D-xylulose 5-phosphate (non-oxidative stage): step 2/3. Transaldolase is important for the balance of metabolites in the pentose-phosphate pathway. This is Probable transaldolase from Shouchella clausii (strain KSM-K16) (Alkalihalobacillus clausii).